A 127-amino-acid chain; its full sequence is Cyclin-dependent kinase 2-associated protein 2 (127 aa).

Residues 1 to 47 (MSYKPIAPAPSSTPGSSTPGPGTPVPTAGSVPSPSGSVPGAAAPFRP) form a disordered region. Positions 9–44 (APSSTPGSSTPGPGTPVPTAGSVPSPSGSVPGAAAP) are enriched in low complexity. The segment at 65–107 (PPGSQGSQSTYTDLLSVIEEMGKEIRPTYAGSKSAMERLKRGI) is interaction with CDK2.

This sequence belongs to the CDK2AP family. Component of the nucleosome remodeling and deacetylase (NuRD) repressor complex, composed of core proteins MTA1, MTA2, MTA3, RBBP4, RBBP7, HDAC1, HDAC2, MBD2, MBD3, and peripherally associated proteins CDK2AP1, CDK2AP2, GATAD2A, GATAD2B, CHD3, CHD4 and CHD5. The exact stoichiometry of the NuRD complex is unknown, and some subunits such as MBD2 and MBD3, GATAD2A and GATAD2B, and CHD3, CHD4 and CHD5 define mutually exclusive NuRD complexes. Interacts with CDK2AP1. Interacts with CDK2. Interacts with MAPK1. In terms of processing, phosphorylated by MAPK1 and CDK2. Oocytes (at protein level).

The protein resides in the cytoplasm. Its subcellular location is the nucleus. Its function is as follows. Acts as a component of the histone deacetylase NuRD complex which participates in the remodeling of chromatin. Inhibits cell cycle G1/S phase transition by repressing CDK2 expression and activation; represses CDK2 activation by inhibiting its interaction with cyclin E and A. Plays a role in regulating the self-renewal of embryonic stem cells (ESCs) and in maintaining cell survival during terminal differentiation of ESCs. Regulates microtubule organization of metaphase II oocytes. The polypeptide is Cyclin-dependent kinase 2-associated protein 2 (Cdk2ap2) (Mus musculus (Mouse)).